A 484-amino-acid chain; its full sequence is MKFKQDFFTQLPEFYSQVYPQGITKPEWLAWSDDAAQLIGLSQPTDELLLGLSGNTAVDGATYYAQVYSGHQFGGYTPRLGDGRSIILGEAIGPNGVWDVALKGGGPTPYSRRGDGRAVMRSAVREFLVSEALHHLHVPTTRALAVIGSDLPVWRESQETAAITVRLARSHIRFGHFEFFCHSERGRADKLIQLLNFTITQHYPHLSCDAAGYKAWFLQVVQDTAKMIAHWQAVGFAHGVMNTDNMSILGDSFDFGPFAFLDTFQEDFICNHSDPEGRYAFGQQPGVGLWNLQRLAQALTPVIPSDDLIAILNQYQEALVQPYLRLMRAKLGLSAVDVPSVEQDKQDLDLIGRFTVLMEKNQLDYTQTWRQLGKLDPTSKHSALRDDFIDVSQFDTWYQAYQLRLGAVADIPAWQTERNSVNPKYILRNYLAQEAIIAVEEGNLAPLHLLQKILTQPFAEHADHEDLAKRPPDWGQGLIMSCSS.

ATP-binding residues include glycine 81, glycine 83, arginine 84, lysine 103, aspartate 115, glycine 116, arginine 166, and arginine 173. The Proton acceptor role is filled by aspartate 244. Residues asparagine 245 and aspartate 254 each coordinate Mg(2+). An ATP-binding site is contributed by aspartate 254.

This sequence belongs to the SELO family. Requires Mg(2+) as cofactor. Mn(2+) serves as cofactor.

It carries out the reaction L-seryl-[protein] + ATP = 3-O-(5'-adenylyl)-L-seryl-[protein] + diphosphate. The enzyme catalyses L-threonyl-[protein] + ATP = 3-O-(5'-adenylyl)-L-threonyl-[protein] + diphosphate. The catalysed reaction is L-tyrosyl-[protein] + ATP = O-(5'-adenylyl)-L-tyrosyl-[protein] + diphosphate. It catalyses the reaction L-histidyl-[protein] + UTP = N(tele)-(5'-uridylyl)-L-histidyl-[protein] + diphosphate. It carries out the reaction L-seryl-[protein] + UTP = O-(5'-uridylyl)-L-seryl-[protein] + diphosphate. The enzyme catalyses L-tyrosyl-[protein] + UTP = O-(5'-uridylyl)-L-tyrosyl-[protein] + diphosphate. Nucleotidyltransferase involved in the post-translational modification of proteins. It can catalyze the addition of adenosine monophosphate (AMP) or uridine monophosphate (UMP) to a protein, resulting in modifications known as AMPylation and UMPylation. This is Protein nucleotidyltransferase YdiU from Shewanella baltica (strain OS195).